We begin with the raw amino-acid sequence, 308 residues long: NADH-cytochrome b5 reductase 1 (308 aa).

The helical transmembrane segment at 10 to 27 (INGVYIPSALLIFGTTII) threads the bilayer. In terms of domain architecture, FAD-binding FR-type spans 59–164 (TEFQNFVLKD…RGPKGAMVYT (106 aa)). FAD contacts are provided by residues 144–159 (TTLRIGDKMKVRGPKG) and 170–207 (HIGMIAGGTGITPMLQVIKAIIKGRPRNGGNDTTQIDL).

Belongs to the flavoprotein pyridine nucleotide cytochrome reductase family. As to quaternary structure, monomer. Component of the 2-(3-amino-3-carboxypropyl)histidine synthase complex composed of DPH1, DPH2, DPH3 and a NADH-dependent reductase, predominantly CBR1. It depends on FAD as a cofactor.

It is found in the mitochondrion outer membrane. It carries out the reaction 2 Fe(III)-[cytochrome b5] + NADH = 2 Fe(II)-[cytochrome b5] + NAD(+) + H(+). The catalysed reaction is 2 Fe(3+)-[Dph3] + NADH = 2 Fe(2+)-[Dph3] + NAD(+) + H(+). It functions in the pathway protein modification; peptidyl-diphthamide biosynthesis. NADH-dependent reductase for DPH3 and cytochrome b5. Required for the first step of diphthamide biosynthesis, a post-translational modification of histidine which occurs in elongation factor 2. DPH1 and DPH2 transfer a 3-amino-3-carboxypropyl (ACP) group from S-adenosyl-L-methionine (SAM) to a histidine residue, the reaction is assisted by a reduction system comprising DPH3 and a NADH-dependent reductase, predominantly CBR1. By reducing DPH3, also involved in the formation of the tRNA wobble base modification mcm5s 2U (5-methoxycarbonylmethyl-2-thiouridine), mediated by the elongator complex. The cytochrome b5/NADH cytochrome b5 reductase electron transfer system supports the catalytic activity of several sterol biosynthetic enzymes. This Coccidioides immitis (strain RS) (Valley fever fungus) protein is NADH-cytochrome b5 reductase 1 (CBR1).